A 114-amino-acid polypeptide reads, in one-letter code: Class I hydrophobin SC16 (114 aa).

The N-terminal stretch at 1 to 17 (MRFFATLVLALPALAMA) is a signal peptide. Intrachain disulfides connect Cys33–Cys93, Cys40–Cys87, Cys41–Cys74, and Cys94–Cys107. N-linked (GlcNAc...) asparagine glycosylation occurs at Asn42.

This sequence belongs to the fungal hydrophobin family. As to quaternary structure, self-assembles to form functional amyloid fibrils called rodlets. Self-assembly into fibrillar rodlets occurs spontaneously at hydrophobic:hydrophilic interfaces and the rodlets further associate laterally to form amphipathic monolayers.

The protein resides in the secreted. It localises to the cell wall. Aerial growth, conidiation, and dispersal of filamentous fungi in the environment rely upon a capability of their secreting small amphipathic proteins called hydrophobins (HPBs) with low sequence identity. Class I can self-assemble into an outermost layer of rodlet bundles on aerial cell surfaces, conferring cellular hydrophobicity that supports fungal growth, development and dispersal; whereas Class II form highly ordered films at water-air interfaces through intermolecular interactions but contribute nothing to the rodlet structure. In Schizophyllum commune (strain H4-8 / FGSC 9210) (Split gill fungus), this protein is Class I hydrophobin SC16.